The sequence spans 408 residues: Argininosuccinate synthase (408 aa).

Residues 10–18 (AYSGGLDTS) and A37 each bind ATP. The L-citrulline site is built by Y90 and S95. Position 120 (G120) interacts with ATP. Residues T122, N126, and D127 each coordinate L-aspartate. L-citrulline is bound at residue N126. L-citrulline is bound by residues R130, S182, S191, E267, and Y279.

Belongs to the argininosuccinate synthase family. Type 1 subfamily. In terms of assembly, homotetramer.

It localises to the cytoplasm. The catalysed reaction is L-citrulline + L-aspartate + ATP = 2-(N(omega)-L-arginino)succinate + AMP + diphosphate + H(+). It functions in the pathway amino-acid biosynthesis; L-arginine biosynthesis; L-arginine from L-ornithine and carbamoyl phosphate: step 2/3. The protein is Argininosuccinate synthase of Paraburkholderia phytofirmans (strain DSM 17436 / LMG 22146 / PsJN) (Burkholderia phytofirmans).